A 199-amino-acid polypeptide reads, in one-letter code: Recombination protein RecR (199 aa).

The C4-type zinc finger occupies 58–73 (CSVCYNLSETELCRIC). The region spanning 81–176 (TRLCVVEQPR…EITRLARGIT (96 aa)) is the Toprim domain.

Belongs to the RecR family.

Functionally, may play a role in DNA repair. It seems to be involved in an RecBC-independent recombinational process of DNA repair. It may act with RecF and RecO. In Rhodopirellula baltica (strain DSM 10527 / NCIMB 13988 / SH1), this protein is Recombination protein RecR.